The sequence spans 289 residues: Glycine--tRNA ligase alpha subunit (289 aa).

The protein belongs to the class-II aminoacyl-tRNA synthetase family. Tetramer of two alpha and two beta subunits.

Its subcellular location is the cytoplasm. The enzyme catalyses tRNA(Gly) + glycine + ATP = glycyl-tRNA(Gly) + AMP + diphosphate. This is Glycine--tRNA ligase alpha subunit from Rickettsia felis (strain ATCC VR-1525 / URRWXCal2) (Rickettsia azadi).